Here is a 217-residue protein sequence, read N- to C-terminus: Glyoxalase ElbB (217 aa).

Catalysis depends on Cys-135, which acts as the Nucleophile.

This sequence belongs to the peptidase C56 family. As to quaternary structure, homodimer.

It catalyses the reaction glyoxal + H2O = glycolate + H(+). In terms of biological role, displays glyoxalase activity, catalyzing the conversion of glyoxal to glycolate. However, this apparent glyoxalase activity may reflect a protein deglycase activity, which could be the primary function of this protein like other DJ-1 superfamily members such as PARK7, YajL, YhbO and HchA. Is not able to use methylglyoxal as substrate. This chain is Glyoxalase ElbB, found in Escherichia coli (strain K12).